We begin with the raw amino-acid sequence, 440 residues long: Histidinol dehydrogenase (440 aa).

Positions 133, 194, and 217 each coordinate NAD(+). Serine 240, glutamine 262, and histidine 265 together coordinate substrate. Glutamine 262 and histidine 265 together coordinate Zn(2+). Catalysis depends on proton acceptor residues glutamate 330 and histidine 331. Substrate contacts are provided by histidine 331, aspartate 364, glutamate 418, and histidine 423. Zn(2+) is bound at residue aspartate 364. Residue histidine 423 coordinates Zn(2+).

The protein belongs to the histidinol dehydrogenase family. Requires Zn(2+) as cofactor.

The enzyme catalyses L-histidinol + 2 NAD(+) + H2O = L-histidine + 2 NADH + 3 H(+). It functions in the pathway amino-acid biosynthesis; L-histidine biosynthesis; L-histidine from 5-phospho-alpha-D-ribose 1-diphosphate: step 9/9. Its function is as follows. Catalyzes the sequential NAD-dependent oxidations of L-histidinol to L-histidinaldehyde and then to L-histidine. This Nitrosospira multiformis (strain ATCC 25196 / NCIMB 11849 / C 71) protein is Histidinol dehydrogenase.